The sequence spans 735 residues: Phosphoribosylformylglycinamidine synthase subunit PurL (735 aa).

The active site involves H48. ATP contacts are provided by Y51 and K90. E92 serves as a coordination point for Mg(2+). Residues 93–96 and R115 each bind substrate; that span reads SHNH. Residue H94 is the Proton acceptor of the active site. Mg(2+) is bound at residue D116. Q239 lines the substrate pocket. D267 lines the Mg(2+) pocket. 311 to 313 contributes to the substrate binding site; the sequence is ESQ. ATP-binding residues include D492 and G529. Residue N530 participates in Mg(2+) binding. S532 serves as a coordination point for substrate.

The protein belongs to the FGAMS family. In terms of assembly, monomer. Part of the FGAM synthase complex composed of 1 PurL, 1 PurQ and 2 PurS subunits.

Its subcellular location is the cytoplasm. It carries out the reaction N(2)-formyl-N(1)-(5-phospho-beta-D-ribosyl)glycinamide + L-glutamine + ATP + H2O = 2-formamido-N(1)-(5-O-phospho-beta-D-ribosyl)acetamidine + L-glutamate + ADP + phosphate + H(+). It participates in purine metabolism; IMP biosynthesis via de novo pathway; 5-amino-1-(5-phospho-D-ribosyl)imidazole from N(2)-formyl-N(1)-(5-phospho-D-ribosyl)glycinamide: step 1/2. Its function is as follows. Part of the phosphoribosylformylglycinamidine synthase complex involved in the purines biosynthetic pathway. Catalyzes the ATP-dependent conversion of formylglycinamide ribonucleotide (FGAR) and glutamine to yield formylglycinamidine ribonucleotide (FGAM) and glutamate. The FGAM synthase complex is composed of three subunits. PurQ produces an ammonia molecule by converting glutamine to glutamate. PurL transfers the ammonia molecule to FGAR to form FGAM in an ATP-dependent manner. PurS interacts with PurQ and PurL and is thought to assist in the transfer of the ammonia molecule from PurQ to PurL. The sequence is that of Phosphoribosylformylglycinamidine synthase subunit PurL from Bradyrhizobium sp. (strain BTAi1 / ATCC BAA-1182).